The sequence spans 87 residues: Small ribosomal subunit protein bS20 (87 aa).

Positions 1-26 (MANIKSAKKRAIQAEKARKHNASRRS) are disordered.

It belongs to the bacterial ribosomal protein bS20 family.

In terms of biological role, binds directly to 16S ribosomal RNA. This is Small ribosomal subunit protein bS20 from Tolumonas auensis (strain DSM 9187 / NBRC 110442 / TA 4).